Reading from the N-terminus, the 1704-residue chain is Villidin (1704 aa).

4 WD repeats span residues Gly82 to Asp122, Lys133 to Ser173, Gly180 to Gln221, and Thr225 to Pro271. 2 disordered regions span residues Ile439 to Phe460 and Ser606 to Thr721. Gly residues predominate over residues Ser442–Gly456. The region spanning Pro459–Glu563 is the PH 1 domain. Composition is skewed to low complexity over residues Gln613–Gln636, Ser651–Ser701, and Asn709–Thr721. PH domains follow at residues Asp727–Lys828 and Glu871–Lys969. The tract at residues Leu848 to Gln877 is disordered. A compositionally biased stretch (acidic residues) spans Ser854–Pro873. 5 Gelsolin-like repeats span residues Lys1025–Asn1119, Ile1138–Tyr1241, Gly1293–Lys1390, Lys1404–Thr1494, and Arg1520–Trp1615. Residues Asp1641–Phe1704 enclose the HP domain.

The protein localises to the membrane. The protein resides in the cytoplasm. It localises to the cytoskeleton. Its function is as follows. May function as a linker between membranes and the actin cytoskeleton. This chain is Villidin (vilA), found in Dictyostelium discoideum (Social amoeba).